Consider the following 209-residue polypeptide: Ribosomal RNA large subunit methyltransferase E (209 aa).

Residues Gly63, Trp65, Asp83, Asp99, and Asp124 each contribute to the S-adenosyl-L-methionine site. Lys164 (proton acceptor) is an active-site residue.

It belongs to the class I-like SAM-binding methyltransferase superfamily. RNA methyltransferase RlmE family.

The protein resides in the cytoplasm. The enzyme catalyses uridine(2552) in 23S rRNA + S-adenosyl-L-methionine = 2'-O-methyluridine(2552) in 23S rRNA + S-adenosyl-L-homocysteine + H(+). Functionally, specifically methylates the uridine in position 2552 of 23S rRNA at the 2'-O position of the ribose in the fully assembled 50S ribosomal subunit. The protein is Ribosomal RNA large subunit methyltransferase E of Shigella dysenteriae serotype 1 (strain Sd197).